A 448-amino-acid chain; its full sequence is Dual specificity mitogen-activated protein kinase kinase 5 (448 aa).

The segment at 18–25 is interaction with MAPK7; the sequence is VIRIKIPN. One can recognise a PB1 domain in the interval 18–109; that stretch reads VIRIKIPNSG…EPLQIFPRAC (92 aa). Positions 64–68 are interaction with MAP3K2/MAP3K3; that stretch reads DEDGD. Residues 116-144 form a disordered region; that stretch reads NIHGLKVNTRAGPSQHSSPAVSDSLPSNS. Residues 117 to 131 are interaction with MAPK7; that stretch reads IHGLKVNTRAGPSQH. Residues 126–144 are compositionally biased toward polar residues; that stretch reads AGPSQHSSPAVSDSLPSNS. The Protein kinase domain occupies 166–409; that stretch reads IRYRDTLGHG…MRKQPKERPA (244 aa). ATP-binding positions include 172–180 and K195; that span reads LGHGNGGTV. The active-site Proton acceptor is the D283. The residue at position 311 (S311) is a Phosphoserine. T315 bears the Phosphothreonine mark.

This sequence belongs to the protein kinase superfamily. STE Ser/Thr protein kinase family. MAP kinase kinase subfamily. Interacts with PARD6A, MAP3K3 and MAPK7. Forms a complex with SQSTM1 and PRKCZ or PRKCI. As to quaternary structure, (Microbial infection) Interacts with Yersinia YopJ. Mg(2+) is required as a cofactor. Activated by phosphorylation on Ser/Thr by MAP kinase kinase kinases. Post-translationally, (Microbial infection) Yersinia YopJ may acetylate Ser/Thr residues, preventing phosphorylation and activation, thus blocking the MAPK signaling pathway. Expressed in many adult tissues. Abundant in heart and skeletal muscle.

It catalyses the reaction L-seryl-[protein] + ATP = O-phospho-L-seryl-[protein] + ADP + H(+). The enzyme catalyses L-threonyl-[protein] + ATP = O-phospho-L-threonyl-[protein] + ADP + H(+). It carries out the reaction L-tyrosyl-[protein] + ATP = O-phospho-L-tyrosyl-[protein] + ADP + H(+). Functionally, acts as a scaffold for the formation of a ternary MAP3K2/MAP3K3-MAP3K5-MAPK7 signaling complex. Activation of this pathway appears to play a critical role in protecting cells from stress-induced apoptosis, neuronal survival and cardiac development and angiogenesis. As part of the MAPK/ERK signaling pathway, acts as a negative regulator of apoptosis in cardiomyocytes via promotion of STUB1/CHIP-mediated ubiquitination and degradation of ICER-type isoforms of CREM. The protein is Dual specificity mitogen-activated protein kinase kinase 5 (MAP2K5) of Homo sapiens (Human).